Here is a 251-residue protein sequence, read N- to C-terminus: Probable transcriptional regulatory protein jk1057 (251 aa).

The segment at 1 to 22 (MAGHSKWATTKHKKAANDAKRG) is disordered.

This sequence belongs to the TACO1 family.

It is found in the cytoplasm. The polypeptide is Probable transcriptional regulatory protein jk1057 (Corynebacterium jeikeium (strain K411)).